A 267-amino-acid polypeptide reads, in one-letter code: Phosphate import ATP-binding protein PstB (267 aa).

The ABC transporter domain maps to Val-21 to Ile-262. An ATP-binding site is contributed by Gly-53–Ser-60.

The protein belongs to the ABC transporter superfamily. Phosphate importer (TC 3.A.1.7) family. In terms of assembly, the complex is composed of two ATP-binding proteins (PstB), two transmembrane proteins (PstC and PstA) and a solute-binding protein (PstS).

It is found in the cell inner membrane. It catalyses the reaction phosphate(out) + ATP + H2O = ADP + 2 phosphate(in) + H(+). Its function is as follows. Part of the ABC transporter complex PstSACB involved in phosphate import. Responsible for energy coupling to the transport system. In Xanthomonas euvesicatoria pv. vesicatoria (strain 85-10) (Xanthomonas campestris pv. vesicatoria), this protein is Phosphate import ATP-binding protein PstB.